The sequence spans 106 residues: Phosphoribosyl-ATP pyrophosphatase (106 aa).

It belongs to the PRA-PH family.

It localises to the cytoplasm. The catalysed reaction is 1-(5-phospho-beta-D-ribosyl)-ATP + H2O = 1-(5-phospho-beta-D-ribosyl)-5'-AMP + diphosphate + H(+). Its pathway is amino-acid biosynthesis; L-histidine biosynthesis; L-histidine from 5-phospho-alpha-D-ribose 1-diphosphate: step 2/9. The protein is Phosphoribosyl-ATP pyrophosphatase of Limosilactobacillus fermentum (strain NBRC 3956 / LMG 18251) (Lactobacillus fermentum).